The following is a 379-amino-acid chain: PqqA peptide cyclase (379 aa).

The 213-residue stretch at 8-220 (LPAPIGLLAE…IRVVEEARER (213 aa)) folds into the Radical SAM core domain. Residues cysteine 22, cysteine 26, and cysteine 29 each contribute to the [4Fe-4S] cluster site.

This sequence belongs to the radical SAM superfamily. PqqE family. As to quaternary structure, interacts with PqqD. The interaction is necessary for activity of PqqE. Requires [4Fe-4S] cluster as cofactor.

It carries out the reaction [PQQ precursor protein] + S-adenosyl-L-methionine = E-Y cross-linked-[PQQ precursor protein] + 5'-deoxyadenosine + L-methionine + H(+). Its pathway is cofactor biosynthesis; pyrroloquinoline quinone biosynthesis. Functionally, catalyzes the cross-linking of a glutamate residue and a tyrosine residue in the PqqA protein as part of the biosynthesis of pyrroloquinoline quinone (PQQ). The polypeptide is PqqA peptide cyclase (Methylobacterium nodulans (strain LMG 21967 / CNCM I-2342 / ORS 2060)).